Consider the following 1017-residue polypeptide: Voltage-gated delayed rectifier potassium channel KCNH4 (1017 aa).

At 1–228 (MPVMKGLLAP…LLHYSVSKAI (228 aa)) the chain is on the cytoplasmic side. The 77-residue stretch at 14–90 (FLDTIATRFD…QRLHKALEGH (77 aa)) folds into the PAS domain. Residues 93-145 (HRAEICFYRKDGSAFWCLLDMMPIKNEMGEVVLFLFSFKDITQSGSPGLGPQG) form the PAC domain. Positions 138 to 157 (SPGLGPQGGRGDSNHENSLG) are disordered. The span at 139 to 148 (PGLGPQGGRG) shows a compositional bias: gly residues. The helical transmembrane segment at 229–249 (WDGLILLATFYVAVTVPYNVC) threads the bilayer. At 250–259 (FSGDDDTPIT) the chain is on the extracellular side. The chain crosses the membrane as a helical span at residues 260-280 (SRHTLVSDIAVEMLFILDIIL). Over 281–302 (NFRTTYVSQSGQVISAPRSIGL) the chain is Cytoplasmic. The helical transmembrane segment at 303–323 (HYLATWFFIDLIAALPFDLLY) threads the bilayer. Topologically, residues 324 to 332 (IFNITVTSL) are extracellular. N326 is a glycosylation site (N-linked (GlcNAc...) asparagine). The helical; Voltage-sensor transmembrane segment at 333–353 (VHLLKTVRLLRLLRLLQKLER) threads the bilayer. At 354 to 361 (YSQCSAVV) the chain is on the cytoplasmic side. Residues 362–382 (LTLLMSVFALLAHWMACIWYV) form a helical membrane-spanning segment. The Extracellular segment spans residues 383-427 (IGRREMEANDPLLWDIGWLHELGKRLEVPYVNGSVGGPSRRSAYI). A glycan (N-linked (GlcNAc...) asparagine) is linked at N414. The pore-forming intramembrane region spans 428–448 (AALYFTLSSLTSVGFGNVCAN). The Selectivity filter signature appears at 439 to 444 (SVGFGN). Residues 449–482 (TDAEKIFSICTMLIGALMHAVVFGNVTAIIQRMY) are Extracellular-facing. N473 carries an N-linked (GlcNAc...) asparagine glycan. Residues 483–503 (SRRSLYHSRMKDLKDFIRVHR) traverse the membrane as a helical segment. The Cytoplasmic portion of the chain corresponds to 504-1017 (LPRPLKQRML…SFQSRSDTFH (514 aa)). The interval 556-620 (LFGAASRGCL…AILGKGDLIG (65 aa)) is cNMP-binding domain. Polar residues predominate over residues 691 to 724 (GSDTSGLSRFSRSPRLSQPRSESLGSSSDKTLPS). Disordered regions lie at residues 691–749 (GSDT…LPNL), 772–803 (LVSS…RCSA), 821–875 (PDLS…EAEE), and 971–1017 (LLDL…DTFH). Over residues 772–787 (LVSSPSLSPSLSPALA) the composition is skewed to low complexity. The span at 978-1002 (ILPPYPSEPDPLGPSPVPEASPPTP) shows a compositional bias: pro residues. Positions 1008 to 1017 (SFQSRSDTFH) are enriched in polar residues.

This sequence belongs to the potassium channel family. H (Eag) (TC 1.A.1.20) subfamily. Kv12.3/KCNH4 sub-subfamily. The potassium channel is probably composed of a homo- or heterotetrameric complex of pore-forming alpha subunits that can associate with modulating beta subunits. In terms of tissue distribution, detected only in brain, in particular in the telencephalon. Detected in putamen and caudate nucleus, and at lower levels in cerebral cortex, occipital and hippocampus.

The protein localises to the membrane. The catalysed reaction is K(+)(in) = K(+)(out). Pore-forming (alpha) subunit of a voltage-gated delayed rectifier. Activates at more negative voltages, exhibits fast prepulse-independent activation kinetics and deactivates much more slowly, but shows no inactivation. The sequence is that of Voltage-gated delayed rectifier potassium channel KCNH4 from Homo sapiens (Human).